A 488-amino-acid polypeptide reads, in one-letter code: UL37 immediate early glycoprotein (488 aa).

The N-terminal stretch at 1–22 (MSPVYVNLLGSVGLLAFWYFSY) is a signal peptide. Residues 83–107 (GEESVTEDTEREDTEEEREDEEEEN) are compositionally biased toward acidic residues. The tract at residues 83-119 (GEESVTEDTEREDTEEEREDEEEENEARTPEVNPMDA) is disordered. N-linked (GlcNAc...) asparagine; by host glycans are attached at residues Asn206, Asn210, Asn219, Asn223, Asn242, Asn275, Asn281, Asn294, Asn297, Asn306, Asn333, Asn337, Asn343, Asn384, and Asn391. The helical transmembrane segment at 439-459 (ICTVAAGSIALLSLFCILLIG) threads the bilayer.

It belongs to the immediate early glycoprotein family. In terms of assembly, interacts with host BAX. Interacts with host RSAD2/viperin; this interaction results in RSAD2/viperin relocalization from the endoplasmic reticulum to the mitochondria, actin cytoskeleton disruption and enhancement of infection. Interacts with host PEX19; this interaction inhibits the peroxisomal-dependent antiviral signaling. Interacts with host CHCHD6; this interaction rewires mitochondria by engaging the conserved MICOS complex.

Its subcellular location is the host membrane. The protein localises to the host endoplasmic reticulum membrane. The protein resides in the host Golgi apparatus membrane. It is found in the host mitochondrion membrane. It localises to the host peroxisome. Its function is as follows. Multifunctional transmembrane protein that plays several key roles in viral replication. Rapidely traffics from the host endoplasmic reticulum to the outer mitochondrial membrane where it acts to inhibit host immune response, block apoptotic signaling, regulate calcium flux, and induce mitochondrial fragmentation. Sequesters proapoptotic BAX at the outer mitochondrial membrane and prevents cytochrome c release and subsequent initiation of the proapoptotic cascade. Also provoques a calcium efflux from host endoplasmic reticulum and F-actin cytoskeleton disruption. Participates in the increase of host mitochondrial biogenesis, thus promoting viral replication by efficient use of newly made mitochondria. Additionally, a subset of vMIA localizes to peroxisomes, causing fragmentation and blocking peroxisomal MAVS signaling. Mechanistically, inhibits host MAVS oligomerization at peroxisomes in a mitochondrial fission factors (MFF)-dependent manner and in mitochondria independently of mitochondrial fission factors. Plays an essential role in the trafficking of host viperin/RSAD2 from the endoplasmic reticulum to the viral assembly compartment via the mitochondria during viral infection as failure of viperin to localize to the mitochondria results in insufficient lipogenesis and thus reduces viral replication. Functionally, may play a role in escape from the host antiviral response. The chain is UL37 immediate early glycoprotein (UL37) from Homo sapiens (Human).